The sequence spans 217 residues: Probable GTP-binding protein EngB (217 aa).

The region spanning 37-214 (AGVEVAFAGR…RAAMARLIGE (178 aa)) is the EngB-type G domain. GTP-binding positions include 45-52 (GRSNVGKS), 72-76 (GRTQE), 92-95 (DMPG), 159-162 (TKAD), and 193-195 (TSS). Mg(2+) contacts are provided by serine 52 and threonine 74.

Belongs to the TRAFAC class TrmE-Era-EngA-EngB-Septin-like GTPase superfamily. EngB GTPase family. The cofactor is Mg(2+).

In terms of biological role, necessary for normal cell division and for the maintenance of normal septation. In Nitrobacter hamburgensis (strain DSM 10229 / NCIMB 13809 / X14), this protein is Probable GTP-binding protein EngB.